The following is a 241-amino-acid chain: Polyol phosphate phosphatase PYP1 (241 aa).

Aspartate 9 serves as the catalytic Nucleophile. Mg(2+) is bound by residues aspartate 9, aspartate 11, and aspartate 179. Aspartate 11 functions as the Proton donor in the catalytic mechanism.

The protein belongs to the HAD-like hydrolase superfamily. The cofactor is Mg(2+).

It localises to the cytoplasm. It is found in the nucleus. The enzyme catalyses D-ribitol 5-phosphate + H2O = ribitol + phosphate. It catalyses the reaction D-sorbitol 6-phosphate + H2O = D-sorbitol + phosphate. It carries out the reaction sn-glycerol 1-phosphate + H2O = glycerol + phosphate. The catalysed reaction is D-erythrose 4-phosphate + H2O = D-erythrose + phosphate. In terms of biological role, hydrolyzes sugar alcohol (polyol) phosphates. Dephosphorylates a variety of substrates, including: sn-glycerol 1-phosphate (D-glycerol 3-phosphate), D-ribitol 5-phosphate, D-sorbitol 6-phosphate (D-glucitol 6-phosphate), and D-erythrose 4-phosphate. Prevents accumulation of toxic levels of polyol phosphates, which can impair glycolysis by inhibiting glucose-6-phosphate isomerase. In Saccharomyces cerevisiae (strain ATCC 204508 / S288c) (Baker's yeast), this protein is Polyol phosphate phosphatase PYP1.